The sequence spans 53 residues: Small ribosomal subunit protein uS14 (53 aa).

Zn(2+)-binding residues include C18, C21, C36, and C39.

The protein belongs to the universal ribosomal protein uS14 family. Zinc-binding uS14 subfamily. In terms of assembly, part of the 30S ribosomal subunit. It depends on Zn(2+) as a cofactor.

Binds 16S rRNA, required for the assembly of 30S particles. The sequence is that of Small ribosomal subunit protein uS14 from Thermoplasma volcanium (strain ATCC 51530 / DSM 4299 / JCM 9571 / NBRC 15438 / GSS1).